We begin with the raw amino-acid sequence, 129 residues long: MARRVTRAKKRERKNIVSGVAHIKSTFNNTIVTITDTKGNTISWSSAGQVGFKGSRKSTPFAAQMAAESAAREAMEHGLKEVEVMVKGPGAGREAAIRSLQAAGLEVNLIKDVTPIPHNGCRPPKRRRV.

The protein belongs to the universal ribosomal protein uS11 family. Part of the 30S ribosomal subunit. Interacts with proteins S7 and S18. Binds to IF-3.

Its function is as follows. Located on the platform of the 30S subunit, it bridges several disparate RNA helices of the 16S rRNA. Forms part of the Shine-Dalgarno cleft in the 70S ribosome. This Pelotomaculum thermopropionicum (strain DSM 13744 / JCM 10971 / SI) protein is Small ribosomal subunit protein uS11.